A 622-amino-acid chain; its full sequence is MNLCSSSGATASNTSLSSTGHPESNGSGPSEATHCFGGGGGGGGNNAGGGSGTDTAPNSNKGTLNGGGSGGGGGANPASSNGHSLTHNNENNGNMPPETRPKMVTVKHPESNKPKPTTKKIVKNIQADQDVIKALQRCRDEGIKRLDLSKSSITVLPNTVRECVHLTELYLYSNKIGQLPTEIGCLVNLRNLALNENSLTSLPESLKHCTQLKVLDLRHNKLAEIPSVIYRLRSLTTLYLRFNRITTVADDLRQLVNLTMLSLRENKIKELGSAIGALVNLTTLDVSHNHLEHLPEDIGNCVNLSALDLQHNELLDIPDSIGNLKSLVRLGLRYNRLNCVPVSLKNCKSMDEFNVEGNGITQLPDGMLASLSALTSITLSRNQFTSYPTGGPAQFTNVYSINLEHNRIDKIPYGIFSRAKGLTKLNMKENMLTALPLDVGTWVNMVELNLATNALQKLPDDIMNLQNLEILILSNNMLKKIPNTIGNLRKLRILDLEENRIEVLPHEIGLLHELQRLILQTNQITMLPRSVGHLSNLTHLSVSENNLQFLPEEIGSLESLENLYINQNPGLEKLPFELALCQNLKYLNIDKCPLGTIPPEIQAGGPSLVLQWLKMHSPYRQM.

Residues 1–30 (MNLCSSSGATASNTSLSSTGHPESNGSGPS) are compositionally biased toward polar residues. A disordered region spans residues 1–117 (MNLCSSSGAT…HPESNKPKPT (117 aa)). Gly residues-rich tracts occupy residues 36–52 (FGGG…GGSG) and 64–75 (LNGGGSGGGGGA). Polar residues predominate over residues 85 to 94 (LTHNNENNGN). LRR repeat units lie at residues 142–163 (GIKR…VREC), 165–186 (HLTE…IGCL), 188–209 (NLRN…LKHC), 211–232 (QLKV…IYRL), 234–255 (SLTT…LRQL), 257–278 (NLTM…IGAL), 280–301 (NLTT…IGNC), 303–324 (NLSA…IGNL), 326–348 (SLVR…KNCK), 349–370 (SMDE…MLAS), 373–394 (ALTS…GPAQ), 397–418 (NVYS…IFSR), 421–442 (GLTK…VGTW), 444–465 (NMVE…IMNL), 467–488 (NLEI…IGNL), 490–511 (KLRI…IGLL), 513–534 (ELQR…VGHL), 536–557 (NLTH…IGSL), 559–581 (SLEN…LALC), and 583–604 (NLKY…IQAG).

It belongs to the SHOC2 family.

In terms of biological role, acts as a Ras effector and participates in MAPK pathway activation. Probably acts as a regulatory subunit of protein phosphatase that specifically dephosphorylates Raf kinase and stimulate Raf activity at specialized signaling complexes upon Ras activation. In Drosophila grimshawi (Hawaiian fruit fly), this protein is Leucine-rich repeat protein soc-2 homolog (Sur-8).